Reading from the N-terminus, the 917-residue chain is MNVDERSRIGGREKDAGPGKGILKQNQSSQMTSSFLENPGVRIPTRIITKKEVLDGSNTTSRINTSNLQSMVKRRVSFAPDVTLHSFTFVPEQNNEIKEPRRRKTSTNSPTKISSQEEPLVTSTQIDDARTEEKTAAEEDPDTSGMELTEPIVATPDSNKASQHDPTSMEMTEVFPRSIRQKNPDVEGESIESSQQIDDVEAVREETMELTAIHNVHDYDSISKDTVEGEPIDLTEYESKPYVPNSVSRSTGKSSDYSVERSNDKSDLSKSENKTNSSQPMEITDIFHADPQNPMSLHSDNNINNDGNEMELTQIQTNFDRDNHHIDESPSEKHAFSSNKRRKLDTVSDYAASVTTPVKEAKDTSGEDNDGDLEMMEKMSPITFSDVDNKIGTRSNDVFTIEPGTEDTGMQTATDDEEDGENVDDNGNKIVEKTRLPEIDKEGQSGIALPTQDYTLREFINEVGVGFLDTKLIDDLDKKVNFPLNSFNFVENQRIDNVFSAFYIDIPILEVEAFRCKELWRSINESKDKFKDFEAQIDKSHPPLLLQEYFSSDEKMKQLMRDQLQLVKGYSKLEAAMEWYEWRKKQLNGLELILAENLNTLKREYEKLNEEVEKVNSIRGKIRKLNEAIKEEIRSLKNLPSDSYKPTLMNRIKIEAFKQELMEHSISLSSSNDFTQEMRSLKLAIAKKSNDILTLRSEVASIDKKIEKRKLFTRFDLPKLRDTLKILESLTGVRFLKFSKATLSIAFLQLDDLRVDINLANFKNNPLSSMKVMNDSNNDDMSYHLFTMLLKNVEAEHQDSMLSNLFFAMKKWRPLLKYIKLLKLLFPVKITQTEEEEALLQFKDYDRRNKTAFFYVISLVSFAQGVFSENGQIPMKVHISTQQDYSPSREVLSDRITHKISGVLPSFTKSRIHLEFT.

A compositionally biased stretch (basic and acidic residues) spans 1 to 17 (MNVDERSRIGGREKDAG). The disordered stretch occupies residues 1–38 (MNVDERSRIGGREKDAGPGKGILKQNQSSQMTSSFLEN). A compositionally biased stretch (polar residues) spans 24-36 (KQNQSSQMTSSFL). The residue at position 77 (S77) is a Phosphoserine. Disordered stretches follow at residues 93 to 172 (QNNE…MEMT), 235 to 282 (TEYE…QPME), and 324 to 343 (HHID…KRRK). Residues 106–126 (STNSPTKISSQEEPLVTSTQI) are compositionally biased toward polar residues. Over residues 127–137 (DDARTEEKTAA) the composition is skewed to basic and acidic residues. The MELT signature appears at 146–149 (MELT). T149 bears the Phosphothreonine; by MPS1 mark. Over residues 156–170 (PDSNKASQHDPTSME) the composition is skewed to polar residues. Residues 165-183 (DPTSMEMTEVFPRSIRQKN) are interacts with the BUB1-BUB3 complex. 2 consecutive short sequence motifs (MELT; degenerate) follow at residues 169-172 (MEMT) and 232-235 (IDLT). A phosphothreonine; by MPS1 mark is found at T172 and T235. Over residues 245–257 (NSVSRSTGKSSDY) the composition is skewed to polar residues. Basic and acidic residues-rich tracts occupy residues 258–273 (SVER…KSEN) and 324–335 (HHIDESPSEKHA). At T356 the chain carries Phosphothreonine. Phosphoserine is present on S380. The disordered stretch occupies residues 397-427 (DVFTIEPGTEDTGMQTATDDEEDGENVDDNG). Positions 414–424 (TDDEEDGENVD) are enriched in acidic residues. Positions 507–638 (PILEVEAFRC…IKEEIRSLKN (132 aa)) are required for interaction with KRE28. Residues 591–628 (ELILAENLNTLKREYEKLNEEVEKVNSIRGKIRKLNEA) adopt a coiled-coil conformation.

As to quaternary structure, component of the KNL1/SPC105 complex composed of SPC105 and KRE28. Part of the outer kinetochore KMN network that includes the KNL1, MIS12 and NDC80 complexes. Interacts (via phosphorylated MELT motifs) with BUB1 and BUB3 in the BUB1-BUB3 complex; the interaction is direct. Interacts with the MIS12 complex subunits MTW1 (via C-terminus) and NSL1 (via C-terminus). Interacts with the NDC80 complex subunits SPC24 and SPC25. Interacts with CNN1 (via N-terminus).

It is found in the nucleus. The protein localises to the chromosome. It localises to the centromere. The protein resides in the kinetochore. Its function is as follows. Acts as a component of the outer kinetochore KNL1 complex that serves as a docking point for spindle assembly checkpoint components and mediates microtubule-kinetochore interactions. Kinetochores, consisting of a centromere-associated inner segment and a microtubule-contacting outer segment, play a crucial role in chromosome segregation by mediating the physical connection between centromeric DNA and spindle microtubules. The outer kinetochore is made up of the ten-subunit KMN network, comprising the MIS12, NDC80 and KNL1 complexes, and auxiliary microtubule-associated components; together they connect the outer kinetochore with the inner kinetochore, bind microtubules, and mediate interactions with mitotic checkpoint proteins that delay anaphase until chromosomes are bioriented on the spindle. Recruits the BUB1-BUB3 complex to kinetochores when phosphorylated by MPS1, to support spindle assembly checkpoint signaling; the effect is reversed by protein phosphatase 1 (PP1). The KNL1 complex is required for kinetochore binding by the kMAPs (kinetochore-bound microtubule-associated proteins) BIM1, BIK1 and SLK19, and motors CIN8 and KAR3. The protein is Outer kinetochore KNL1 complex subunit SPC105 (SPC105) of Saccharomyces cerevisiae (strain ATCC 204508 / S288c) (Baker's yeast).